Reading from the N-terminus, the 88-residue chain is Beta-insect excitatory toxin LqhIT1b (88 aa).

The N-terminal stretch at methionine 1–glycine 18 is a signal peptide. The region spanning lysine 20 to aspartate 83 is the LCN-type CS-alpha/beta domain. 4 disulfide bridges follow: cysteine 34-cysteine 55, cysteine 40-cysteine 60, cysteine 44-cysteine 62, and cysteine 56-cysteine 82.

Belongs to the long (4 C-C) scorpion toxin superfamily. Sodium channel inhibitor family. Beta subfamily. Expressed by the venom gland.

The protein localises to the secreted. Functionally, excitatory insect toxins induce a spastic paralysis. They bind voltage-independently at site-4 of sodium channels (Nav) and shift the voltage of activation toward more negative potentials thereby affecting sodium channel activation and promoting spontaneous and repetitive firing. This chain is Beta-insect excitatory toxin LqhIT1b, found in Leiurus hebraeus (Hebrew deathstalker scorpion).